The primary structure comprises 63 residues: MNFNKIFVFVALILAISLGNSEAGWLRKLGKKIERIGQHTRDASIQVLGIAQQAANVAATARG.

The first 23 residues, 1-23 (MNFNKIFVFVALILAISLGNSEA), serve as a signal peptide directing secretion. Arg-62 is subject to Arginine amide.

Belongs to the cecropin family. Strongly expressed in larval, pupal and adult fat body and hemocytes after injection of bacteria. Maximal expression is seen in pupae.

The protein resides in the secreted. Cecropins have lytic and antibacterial activity against several Gram-positive and Gram-negative bacteria. The chain is Cecropin-B (CecB) from Drosophila melanogaster (Fruit fly).